A 149-amino-acid polypeptide reads, in one-letter code: MQVILLDKIVHLGQVGDQVNVKSGFARNFLIPQGKAVMATKANIEHFEARRAELEATAAANLAAAQARAAEVTALGSVTIASKAGDEGRLFGAITTRDVAEAVTAAGVKIAKSEVRLPNGPIRTLGDHDVRFQLHGEVFATLDVIVVAE.

This sequence belongs to the bacterial ribosomal protein bL9 family.

Its function is as follows. Binds to the 23S rRNA. This is Large ribosomal subunit protein bL9 from Haemophilus influenzae (strain PittGG).